Here is a 170-residue protein sequence, read N- to C-terminus: Large ribosomal subunit protein uL5 (170 aa).

It belongs to the universal ribosomal protein uL5 family. Component of the large ribosomal subunit.

It localises to the nucleus. It is found in the cytoplasm. Functionally, component of the ribosome, a large ribonucleoprotein complex responsible for the synthesis of proteins in the cell. The small ribosomal subunit (SSU) binds messenger RNAs (mRNAs) and translates the encoded message by selecting cognate aminoacyl-transfer RNA (tRNA) molecules. The large subunit (LSU) contains the ribosomal catalytic site termed the peptidyl transferase center (PTC), which catalyzes the formation of peptide bonds, thereby polymerizing the amino acids delivered by tRNAs into a polypeptide chain. The nascent polypeptides leave the ribosome through a tunnel in the LSU and interact with protein factors that function in enzymatic processing, targeting, and the membrane insertion of nascent chains at the exit of the ribosomal tunnel. The chain is Large ribosomal subunit protein uL5 (RPL11) from Chlamydomonas reinhardtii (Chlamydomonas smithii).